A 265-amino-acid polypeptide reads, in one-letter code: Expansin-like A1 (265 aa).

The N-terminal stretch at 1–20 is a signal peptide; that stretch reads MGSFLFLIVVIFLFSSSVNA. Positions 41-147 constitute an Expansin-like EG45 domain; it reads SGACAYGSMA…QRVPCDYGNK (107 aa). Residues 42–62 traverse the membrane as a helical segment; sequence GACAYGSMATSFFAGHIAAAI. Asn-99 and Asn-102 each carry an N-linked (GlcNAc...) asparagine glycan. One can recognise an Expansin-like CBD domain in the interval 161-244; the sequence is NYLEIKLLYQ…NWEAGKIYDA (84 aa).

Belongs to the expansin family. Expansin-like A subfamily.

The protein localises to the membrane. The sequence is that of Expansin-like A1 (EXLA1) from Arabidopsis thaliana (Mouse-ear cress).